Reading from the N-terminus, the 180-residue chain is 6,7-dimethyl-8-ribityllumazine synthase (180 aa).

Residues phenylalanine 23, 61–63 (SFE), and 85–87 (AVI) contribute to the 5-amino-6-(D-ribitylamino)uracil site. 90–91 (QT) provides a ligand contact to (2S)-2-hydroxy-3-oxobutyl phosphate. Histidine 93 (proton donor) is an active-site residue. 5-amino-6-(D-ribitylamino)uracil is bound at residue phenylalanine 118. A (2S)-2-hydroxy-3-oxobutyl phosphate-binding site is contributed by arginine 132.

Belongs to the DMRL synthase family.

It carries out the reaction (2S)-2-hydroxy-3-oxobutyl phosphate + 5-amino-6-(D-ribitylamino)uracil = 6,7-dimethyl-8-(1-D-ribityl)lumazine + phosphate + 2 H2O + H(+). It participates in cofactor biosynthesis; riboflavin biosynthesis; riboflavin from 2-hydroxy-3-oxobutyl phosphate and 5-amino-6-(D-ribitylamino)uracil: step 1/2. In terms of biological role, catalyzes the formation of 6,7-dimethyl-8-ribityllumazine by condensation of 5-amino-6-(D-ribitylamino)uracil with 3,4-dihydroxy-2-butanone 4-phosphate. This is the penultimate step in the biosynthesis of riboflavin. This Gloeobacter violaceus (strain ATCC 29082 / PCC 7421) protein is 6,7-dimethyl-8-ribityllumazine synthase.